A 154-amino-acid chain; its full sequence is Endoribonuclease YbeY (154 aa).

3 residues coordinate Zn(2+): His113, His117, and His123.

The protein belongs to the endoribonuclease YbeY family. The cofactor is Zn(2+).

The protein resides in the cytoplasm. Single strand-specific metallo-endoribonuclease involved in late-stage 70S ribosome quality control and in maturation of the 3' terminus of the 16S rRNA. The polypeptide is Endoribonuclease YbeY (Vibrio campbellii (strain ATCC BAA-1116)).